Reading from the N-terminus, the 270-residue chain is Phthiotriol/phenolphthiotriol dimycocerosates methyltransferase (270 aa).

The protein belongs to the methyltransferase superfamily. Phthiotriol/phenolphthiotriol dimycocerosates methyltransferase family.

Functionally, catalyzes the methylation of the lipid moiety of the intermediate compounds phthiotriol and glycosylated phenolphthiotriol dimycoserosates to form phthiocerol dimycocerosates (DIM A) and glycosylated phenolphthiocerol dimycocerosates (PGL). The chain is Phthiotriol/phenolphthiotriol dimycocerosates methyltransferase from Mycobacterium bovis (strain ATCC BAA-935 / AF2122/97).